Here is a 337-residue protein sequence, read N- to C-terminus: Ketol-acid reductoisomerase (NADP(+)) (337 aa).

The region spanning 3 to 183 (VEMFYDADAD…GGARAGVIKT (181 aa)) is the KARI N-terminal Rossmann domain. NADP(+)-binding positions include 26-29 (YGSQ), Lys-49, Ser-52, Ser-54, and 84-87 (DTAQ). The active site involves His-109. NADP(+) is bound at residue Gly-135. Residues 184–329 (TFKDETETDL…KKLRDLMSWV (146 aa)) form the KARI C-terminal knotted domain. Residues Asp-192, Glu-196, Glu-228, and Glu-232 each coordinate Mg(2+). Residue Ser-253 participates in substrate binding.

Belongs to the ketol-acid reductoisomerase family. The cofactor is Mg(2+).

The enzyme catalyses (2R)-2,3-dihydroxy-3-methylbutanoate + NADP(+) = (2S)-2-acetolactate + NADPH + H(+). It carries out the reaction (2R,3R)-2,3-dihydroxy-3-methylpentanoate + NADP(+) = (S)-2-ethyl-2-hydroxy-3-oxobutanoate + NADPH + H(+). Its pathway is amino-acid biosynthesis; L-isoleucine biosynthesis; L-isoleucine from 2-oxobutanoate: step 2/4. It participates in amino-acid biosynthesis; L-valine biosynthesis; L-valine from pyruvate: step 2/4. In terms of biological role, involved in the biosynthesis of branched-chain amino acids (BCAA). Catalyzes an alkyl-migration followed by a ketol-acid reduction of (S)-2-acetolactate (S2AL) to yield (R)-2,3-dihydroxy-isovalerate. In the isomerase reaction, S2AL is rearranged via a Mg-dependent methyl migration to produce 3-hydroxy-3-methyl-2-ketobutyrate (HMKB). In the reductase reaction, this 2-ketoacid undergoes a metal-dependent reduction by NADPH to yield (R)-2,3-dihydroxy-isovalerate. This chain is Ketol-acid reductoisomerase (NADP(+)), found in Mycolicibacterium gilvum (strain PYR-GCK) (Mycobacterium gilvum (strain PYR-GCK)).